A 2595-amino-acid polypeptide reads, in one-letter code: Glucosylceramide transporter ABCA12 (2595 aa).

A helical membrane pass occupies residues 23–43 (PLWTLVLILWPVIIFIILAIT). N-linked (GlcNAc...) asparagine glycans are attached at residues Asn156, Asn174, Asn214, Asn275, Asn333, Asn367, Asn383, Asn412, Asn435, Asn528, Asn543, Asn577, Asn608, Asn623, Asn648, Asn752, Asn826, Asn920, and Asn963. Transmembrane regions (helical) follow at residues 1065 to 1085 (VSYS…AAFV), 1112 to 1132 (FAWL…LIII), and 1145 to 1165 (FILF…SYLI). Residue Asn1170 is glycosylated (N-linked (GlcNAc...) asparagine). The next 3 helical transmembrane spans lie at 1174–1194 (IAAL…IVLV), 1200–1220 (LSYV…SYAS), and 1250–1270 (FGWL…IAWY). Residues 1346 to 1577 (VALHGVTKIY…FGDGYHLTLT (232 aa)) enclose the ABC transporter 1 domain. 1378-1385 (GPNGAGKT) lines the ATP pocket. N-linked (GlcNAc...) asparagine glycosylation is found at Asn1524, Asn1663, and Asn1704. Residues 1747–1767 (LIAQVILPIVFVTTAMGLGTL) form a helical membrane-spanning segment. N-linked (GlcNAc...) asparagine glycans are attached at residues Asn1769, Asn1819, Asn1835, Asn1876, Asn1921, and Asn1952. Helical transmembrane passes span 1979–1999 (ATIS…GYSV), 2035–2055 (FIYD…IIAI), 2072–2092 (LLLL…AGLF), and 2103–2123 (VCVN…VYFL). Asn2178 carries N-linked (GlcNAc...) asparagine glycosylation. Residues 2187 to 2207 (GAMFVALVSQGTMFFSLRLLI) form a helical membrane-spanning segment. Residues Asn2208 and Asn2223 are each glycosylated (N-linked (GlcNAc...) asparagine). The 236-residue stretch at 2254–2489 (VQLYCLTKTY…FGRGFTVKVH (236 aa)) folds into the ABC transporter 2 domain. A helical membrane pass occupies residues 2270–2290 (IIAVNNISIGIPAGECFGLLG). Residue 2290–2297 (GVNGAGKT) coordinates ATP. N-linked (GlcNAc...) asparagine glycans are attached at residues Asn2318, Asn2542, and Asn2547. Residues 2571-2595 (SYETADTSSQGSTISVDSQDDQMES) form a disordered region. Residues 2574–2587 (TADTSSQGSTISVD) are compositionally biased toward polar residues.

It belongs to the ABC transporter superfamily. ABCA family. Interacts with NR1H2 and ABCA1; this interaction is required for ABCA1 localization to the cell surface and is necessary for its normal activity and stability. Mainly expressed in the stomach, placenta, testis and fetal brain. Expressed in the upper epidermal layers, mainly the granular layers, of skin. Expressed throughout the normal interfollicular epidermis with prominent expression in the stratum granulosum. Expressed in alpha and beta cells of pancreatic islets.

It localises to the cytoplasmic vesicle. The protein resides in the secretory vesicle membrane. It is found in the golgi apparatus membrane. It carries out the reaction ATP + H2O + phospholipidSide 1 = ADP + phosphate + phospholipidSide 2.. It catalyses the reaction a beta-D-glucosylceramide(in) + ATP + H2O = a beta-D-glucosylceramide(out) + ADP + phosphate + H(+). Transports lipids such as glucosylceramides from the outer to the inner leaflet of lamellar granules (LGs) membrane, whereby the lipids are finally transported to the keratinocyte periphery via the trans-Golgi network and LGs and released to the apical surface of the granular keratinocytes to form lipid lamellae in the stratum corneum of the epidermis, which is essential for skin barrier function. In the meantime, participates in the transport of the lamellar granules-associated proteolytic enzymes, in turn regulates desquamation and keratinocyte differentiation. Furthermore, is essential for the regulation of cellular cholesterol homeostasis by regulating ABCA1-dependent cholesterol efflux from macrophages through interaction with NR1H2 and ABCA1. Plays pleiotropic roles in regulating glucose stimulated insulin secretion from beta cells, regulating the morphology and fusion of insulin granules, lipid raft abundance and the actin cytoskeleton. Also involved in lung surfactant biogenesis. This is Glucosylceramide transporter ABCA12 from Homo sapiens (Human).